Here is a 48-residue protein sequence, read N- to C-terminus: Cuticle protein 10 (48 aa).

In Limulus polyphemus (Atlantic horseshoe crab), this protein is Cuticle protein 10.